Consider the following 414-residue polypeptide: Snake venom metalloproteinase atrolysin-D (414 aa).

The N-terminal stretch at 1–20 is a signal peptide; that stretch reads MIEVLLVTICLAVFPYQGSS. Residues 21 to 190 constitute a propeptide that is removed on maturation; that stretch reads IILESGNVND…KASDLNLNPD (170 aa). The residue at position 191 (Gln-191) is a Pyrrolidone carboxylic acid. In terms of domain architecture, Peptidase M12B spans 197–393; sequence RYIELVVVAD…YKPQCILNKP (197 aa). Ca(2+)-binding residues include Glu-200 and Asp-284. 2 disulfide bridges follow: Cys-308/Cys-388 and Cys-348/Cys-355. His-333 lines the Zn(2+) pocket. Residue Glu-334 is part of the active site. 2 residues coordinate Zn(2+): His-337 and His-343. 2 residues coordinate Ca(2+): Cys-388 and Asn-391. A propeptide spanning residues 394-414 is cleaved from the precursor; the sequence is LRIDPVSTPVSGNELLEAGEE.

This sequence belongs to the venom metalloproteinase (M12B) family. P-I subfamily. Monomer. Zn(2+) is required as a cofactor. In terms of processing, the N-terminus is blocked. As to expression, expressed by the venom gland.

It localises to the secreted. The enzyme catalyses Cleavage of 5-His-|-Leu-6, 10-His-|-Leu-11, 14-Ala-|-Leu-15, 16-Tyr-|-Leu-17 and 23-Gly-|-Phe-24 of insulin B chain. With small molecule substrates prefers hydrophobic residue at P2' and small residue such as Ala, Gly at P1.. Snake venom zinc metalloproteinase that causes hemorrhage by provoking the degradation of the sub-endothelial matrix proteins (fibronectin, laminin, type IV collagen, nidogen, and gelatins). The protein is Snake venom metalloproteinase atrolysin-D of Crotalus atrox (Western diamondback rattlesnake).